A 134-amino-acid chain; its full sequence is UPF0412 protein YaaI (134 aa).

An N-terminal signal peptide occupies residues 1 to 23; the sequence is MKSVFTISASLAISLMLCCTAQA.

It belongs to the UPF0412 family.

The sequence is that of UPF0412 protein YaaI from Escherichia coli O157:H7.